The chain runs to 121 residues: Ribosome-binding factor A (121 aa).

It belongs to the RbfA family. In terms of assembly, monomer. Binds 30S ribosomal subunits, but not 50S ribosomal subunits or 70S ribosomes.

The protein resides in the cytoplasm. Functionally, one of several proteins that assist in the late maturation steps of the functional core of the 30S ribosomal subunit. Associates with free 30S ribosomal subunits (but not with 30S subunits that are part of 70S ribosomes or polysomes). Required for efficient processing of 16S rRNA. May interact with the 5'-terminal helix region of 16S rRNA. In Finegoldia magna (strain ATCC 29328 / DSM 20472 / WAL 2508) (Peptostreptococcus magnus), this protein is Ribosome-binding factor A.